The sequence spans 446 residues: Oxysterols receptor LXR-beta (446 aa).

The interval 1-69 (MSSPTSSLDT…PERKRKKGPA (69 aa)) is disordered. The segment at 1 to 76 (MSSPTSSLDT…GPAPKMLGHE (76 aa)) is transactivation AF-1; required for ligand-independent transactivation function. Residues 17–28 (SPQPSTSATSPT) are compositionally biased toward low complexity. The nuclear receptor DNA-binding region spans 75-152 (HELCRVCGDK…AGMREQCVLS (78 aa)). NR C4-type zinc fingers lie at residues 78–98 (CRVC…CEGC) and 116–140 (CRGS…LRKC). The tract at residues 159–201 (KRIQKQQQQQPPPPSEPAASSSGRPAASPGTSEASSQGSGEGE) is disordered. Residues 175–196 (PAASSSGRPAASPGTSEASSQG) show a composition bias toward low complexity. The interval 205-446 (LTAAQELMIQ…LLSEIWDVHE (242 aa)) is transactivation AF-2; required for ligand-dependent transactivation function; mediates interaction with CCAR2. The region spanning 208 to 446 (AQELMIQQLV…LLSEIWDVHE (239 aa)) is the NR LBD domain. Residues Lys395 and Lys433 each participate in a glycyl lysine isopeptide (Lys-Gly) (interchain with G-Cter in SUMO2) cross-link.

Belongs to the nuclear hormone receptor family. NR1 subfamily. As to quaternary structure, forms a heterodimer with RXR. Interacts with CCAR2 (via N-terminus) in a ligand-independent manner. Interacts (when sumoylated) with GPS2; interaction with GPS2 onto hepatic acute phase protein promoters prevents N-Cor corepressor complex dissociation. Interacts with ABCA12 and ABCA1; this interaction is required for ABCA1 localization to the cell surface and is necessary for its normal activity and stability. Sumoylated by SUMO2 at Lys-395 and Lys-433 during the hepatic acute phase response, leading to promote interaction with GPS2 and prevent N-Cor corepressor complex dissociation. Ubiquitous.

It localises to the nucleus. Nuclear receptor that exhibits a ligand-dependent transcriptional activation activity. Binds preferentially to double-stranded oligonucleotide direct repeats having the consensus half-site sequence 5'-AGGTCA-3' and 4-nt spacing (DR-4). Regulates cholesterol uptake through MYLIP-dependent ubiquitination of LDLR, VLDLR and LRP8; DLDLR and LRP8. Interplays functionally with RORA for the regulation of genes involved in liver metabolism. Induces LPCAT3-dependent phospholipid remodeling in endoplasmic reticulum (ER) membranes of hepatocytes, driving SREBF1 processing and lipogenesis. Via LPCAT3, triggers the incorporation of arachidonate into phosphatidylcholines of ER membranes, increasing membrane dynamics and enabling triacylglycerols transfer to nascent very low-density lipoprotein (VLDL) particles. Via LPCAT3 also counteracts lipid-induced ER stress response and inflammation, likely by modulating SRC kinase membrane compartmentalization and limiting the synthesis of lipid inflammatory mediators. Plays an anti-inflammatory role during the hepatic acute phase response by acting as a corepressor: inhibits the hepatic acute phase response by preventing dissociation of the N-Cor corepressor complex. The polypeptide is Oxysterols receptor LXR-beta (Nr1h2) (Mus musculus (Mouse)).